The primary structure comprises 468 residues: Cytochrome bd ubiquinol oxidase subunit 1 (468 aa).

Helical transmembrane passes span 15–35 (TLFH…VALM), 51–71 (AKFW…TGIL), 95–115 (LAIE…LWIF), 124–144 (IHAL…FWIL), 177–197 (LWVE…FFIA), 219–239 (LAMI…HMQA), 331–351 (FRIM…GLWL), 366–386 (IMIA…IMTE), and 416–436 (SIIA…FLFI). His18 is a binding site for heme b. Position 183 (His183) interacts with heme b. Position 334 (Met334) interacts with heme b. Residues 448 to 468 (HHDVPVSTDPFSQEVYHGISS) form a disordered region.

Belongs to the cytochrome ubiquinol oxidase subunit 1 family. In terms of assembly, heterodimer of subunits I and II. Requires heme b as cofactor. Heme d cis-diol serves as cofactor.

Its subcellular location is the cell membrane. It catalyses the reaction 2 a ubiquinol + O2(in) + 4 H(+)(in) = 2 a ubiquinone + 2 H2O(in) + 4 H(+)(out). The polypeptide is Cytochrome bd ubiquinol oxidase subunit 1 (cydA) (Bacillus subtilis (strain 168)).